Consider the following 385-residue polypeptide: Chaperone protein DnaJ (385 aa).

The region spanning 5-70 (DYYEVLGVSK…DKKAAYDRFG (66 aa)) is the J domain. The CR-type zinc-finger motif lies at 143 to 221 (GLSKQITVPS…CGGAGRQEKD (79 aa)). 8 residues coordinate Zn(2+): Cys-156, Cys-159, Cys-173, Cys-176, Cys-195, Cys-198, Cys-209, and Cys-212. CXXCXGXG motif repeat units follow at residues 156–163 (CSSCDGTG), 173–180 (CPTCSGMG), 195–202 (CPTCNGMG), and 209–216 (CRTCGGAG). The interval 299–323 (GGRSRVRVPEGSQSGRQMRLRGKGM) is disordered.

The protein belongs to the DnaJ family. In terms of assembly, homodimer. Zn(2+) is required as a cofactor.

The protein resides in the cytoplasm. Functionally, participates actively in the response to hyperosmotic and heat shock by preventing the aggregation of stress-denatured proteins and by disaggregating proteins, also in an autonomous, DnaK-independent fashion. Unfolded proteins bind initially to DnaJ; upon interaction with the DnaJ-bound protein, DnaK hydrolyzes its bound ATP, resulting in the formation of a stable complex. GrpE releases ADP from DnaK; ATP binding to DnaK triggers the release of the substrate protein, thus completing the reaction cycle. Several rounds of ATP-dependent interactions between DnaJ, DnaK and GrpE are required for fully efficient folding. Also involved, together with DnaK and GrpE, in the DNA replication of plasmids through activation of initiation proteins. This Jannaschia sp. (strain CCS1) protein is Chaperone protein DnaJ.